A 151-amino-acid chain; its full sequence is UPAR/Ly6 domain-containing protein rtv (151 aa).

The signal sequence occupies residues 1–19 (MQFTSLLLAVIFLISLVSI). Residues 20–125 (DGLLRRCYQC…QGDLCNGARS (106 aa)) are Extracellular-facing. 5 disulfides stabilise this stretch: C26/C65, C29/C38, C60/C88, C100/C113, and C115/C120. N45 carries N-linked (GlcNAc...) asparagine glycosylation. A lipid anchor (GPI-anchor amidated asparagine) is attached at N121. The propeptide at 122-151 (GARSWSSAPQMILITMLPLLGSWLLQRMRN) is removed in mature form. The chain crosses the membrane as a helical span at residues 126-146 (WSSAPQMILITMLPLLGSWLL). The Cytoplasmic portion of the chain corresponds to 147–151 (QRMRN).

The protein belongs to the quiver family.

The protein resides in the cell membrane. In terms of biological role, required for chitin fiber assembly and organization involved in cuticle formation and tracheal development. This is UPAR/Ly6 domain-containing protein rtv from Drosophila melanogaster (Fruit fly).